The chain runs to 380 residues: Glucose-1-phosphate adenylyltransferase (380 aa).

Residues Gly-164, 179-180, and Ser-190 each bind alpha-D-glucose 1-phosphate; that span reads EK.

This sequence belongs to the bacterial/plant glucose-1-phosphate adenylyltransferase family. In terms of assembly, homotetramer.

The enzyme catalyses alpha-D-glucose 1-phosphate + ATP + H(+) = ADP-alpha-D-glucose + diphosphate. It functions in the pathway glycan biosynthesis; glycogen biosynthesis. Its function is as follows. Involved in the biosynthesis of ADP-glucose, a building block required for the elongation reactions to produce glycogen. Catalyzes the reaction between ATP and alpha-D-glucose 1-phosphate (G1P) to produce pyrophosphate and ADP-Glc. This is Glucose-1-phosphate adenylyltransferase from Streptococcus pneumoniae (strain 70585).